Consider the following 1079-residue polypeptide: Zn(2)-C6 fungal-type transcription factor FTF1a (1079 aa).

The segment at residues 177–204 (CIACRRKKIRCSGEKPACKQCLHSCIPC) is a DNA-binding region (zn(2)-C6 fungal-type).

It is found in the nucleus. Its function is as follows. Zn(2)-C6 fungal-type transcription factor that has a role in the establishment of the fungus within the plant and/or the progress of the disease. Regulates the expression of virulence factors such as SIX1 and SIX6. The chain is Zn(2)-C6 fungal-type transcription factor FTF1a from Fusarium oxysporum f. sp. lycopersici (strain 4287 / CBS 123668 / FGSC 9935 / NRRL 34936) (Fusarium vascular wilt of tomato).